Reading from the N-terminus, the 796-residue chain is Protein U58 (796 aa).

The protein belongs to the herpesviridae UL87 family.

In Elephas maximus (Indian elephant), this protein is Protein U58.